The following is a 263-amino-acid chain: H-2 class II histocompatibility antigen, A-S beta chain (263 aa).

An N-terminal signal peptide occupies residues 1–27; the sequence is MALQIPSLLLSAAVVVLMVLSSPGTEG. The interval 28 to 120 is beta-1; the sequence is GDSERHFVFQ…VETHTSLRRL (93 aa). At 28–224 the chain is on the extracellular side; the sequence is GDSERHFVFQ…RAQSESARSK (197 aa). 2 disulfides stabilise this stretch: Cys-42–Cys-104 and Cys-143–Cys-199. Asn-46 is a glycosylation site (N-linked (GlcNAc...) asparagine). The beta-2 stretch occupies residues 121–214; that stretch reads EQPNVVISLS…SLKSPITVEW (94 aa). Residues 123-211 enclose the Ig-like C1-type domain; the sequence is PNVVISLSRT…EHPSLKSPIT (89 aa). The interval 215-224 is connecting peptide; the sequence is RAQSESARSK. A helical membrane pass occupies residues 225-245; the sequence is MLSGIGGCVLGVIFLGLGLFI. Residues 246-263 lie on the Cytoplasmic side of the membrane; the sequence is RHRSQKGPRGPPPAGLLQ.

Belongs to the MHC class II family. Ubiquitinated in immature dendritic cells leading to down-regulation of MHC class II.

It is found in the membrane. In Mus musculus (Mouse), this protein is H-2 class II histocompatibility antigen, A-S beta chain (H2-Ab1).